The primary structure comprises 486 residues: Deleted in azoospermia protein 3 (486 aa).

Polar residues predominate over residues 1–10 (MSAANPETPN). The interval 1–27 (MSAANPETPNSTISREASTQSSSAAAS) is disordered. Over residues 11 to 27 (STISREASTQSSSAAAS) the composition is skewed to low complexity. The 76-residue stretch at 40-115 (NTVFVGGIDA…KKLKLGPAIR (76 aa)) folds into the RRM domain. 12 consecutive DAZ domains span residues 167 to 190 (AYSAYPHSPGQVITGCQLLVYNYQ), 191 to 214 (EYPTYPDSAFQVTTGYQLPVYNYQ), 215 to 238 (PFPAYPRSPFQVTAGYQLPVYNYQ), 239 to 262 (AFPAYPNSPFQVATGYQFPVYNYQ), 263 to 286 (PFPAYPSSPFQVTAGYQLPVYNYQ), 287 to 310 (AFPAYPNSPFQVATGYQFPVYNYQ), 311 to 334 (AFPAYPNSPVQVTTGYQLPVYNYQ), 335 to 358 (AFPAYPNSPFQVATGYQFPVYNYQ), 359 to 382 (AFPAYPNSPVQVTTGYQLPVYNYQ), 383 to 406 (AFPAYPNSPFQVATGYQFPVYNYQ), 407 to 430 (AFPAYPNSPVQVTTGYQLPVYNYQ), and 431 to 454 (AFPAYPNSAVQVTTGYQFHVYNYQ).

It belongs to the RRM DAZ family. As to quaternary structure, forms a heterodimer with BOLL and DAZL. Interacts with PUM2, DAZAP1, DAZAP2, DZIP1 and DZIP3. In terms of tissue distribution, testis specific.

It is found in the cytoplasm. The protein resides in the nucleus. Its function is as follows. RNA-binding protein that plays an essential role in spermatogenesis. May act by binding to the 3'-UTR of mRNAs and regulating their translation. The sequence is that of Deleted in azoospermia protein 3 (DAZ3) from Homo sapiens (Human).